Here is a 305-residue protein sequence, read N- to C-terminus: Tetraspanin-12 (305 aa).

Residues 1-12 (MAREDSVKCLRC) lie on the Cytoplasmic side of the membrane. 2 S-palmitoyl cysteine lipidation sites follow: cysteine 9 and cysteine 12. Residues 13–33 (LLYALNLLFWLMSISVLAVSA) form a helical membrane-spanning segment. Topologically, residues 34-59 (WMRDYLNNVLTLTAETRVEEAVILTY) are extracellular. Residues 60–80 (FPVVHPVMIAVCCFLIIVGML) form a helical membrane-spanning segment. Residues 81–89 (GYCGTVKRN) lie on the Cytoplasmic side of the membrane. Cysteine 83 carries the S-palmitoyl cysteine lipid modification. A helical transmembrane segment spans residues 90–110 (LLLLAWYFGSLLVIFCVELAC). The Extracellular segment spans residues 111–224 (GVWTYEQEIM…RGTKQLQVLR (114 aa)). The chain crosses the membrane as a helical span at residues 225-245 (FLGISIGVTQILAMILTITLL). At 246–305 (WALYYDRREPGTDQMMALKNDTTQHLPCHSVELLKPSLSRIFEHTSMANSFNTHFEMEEL) the chain is on the cytoplasmic side.

Belongs to the tetraspanin (TM4SF) family. As to quaternary structure, component of a complex, at least composed of TSPAN12, FZD4 and norrin (NDP). Interacts (when palmitoylated) with ADAM10. Interacts with MMP14/MT1-MMP. Post-translationally, palmitoylated; required for interaction with ADAM10. The precise position of palmitoylated residues is unclear and occurs either on Cys-9, Cys-12 and/or Cys-83.

It is found in the cell membrane. Functionally, regulator of cell surface receptor signal transduction. Plays a central role in retinal vascularization by regulating norrin (NDP) signal transduction. Acts in concert with norrin (NDP) to promote FZD4 multimerization and subsequent activation of FZD4, leading to promote accumulation of beta-catenin (CTNNB1) and stimulate LEF/TCF-mediated transcriptional programs. Suprisingly, it only activates the norrin (NDP)-dependent activation of FZD4, while it does not activate the Wnt-dependent activation of FZD4, suggesting the existence of a Wnt-independent signaling that also promote accumulation the beta-catenin (CTNNB1). Acts as a regulator of membrane proteinases such as ADAM10 and MMP14/MT1-MMP. Activates ADAM10-dependent cleavage activity of amyloid precursor protein (APP). Activates MMP14/MT1-MMP-dependent cleavage activity. This Bos taurus (Bovine) protein is Tetraspanin-12 (TSPAN12).